The chain runs to 94 residues: Co-chaperonin GroES (94 aa).

Belongs to the GroES chaperonin family. Heptamer of 7 subunits arranged in a ring. Interacts with the chaperonin GroEL.

The protein localises to the cytoplasm. Together with the chaperonin GroEL, plays an essential role in assisting protein folding. The GroEL-GroES system forms a nano-cage that allows encapsulation of the non-native substrate proteins and provides a physical environment optimized to promote and accelerate protein folding. GroES binds to the apical surface of the GroEL ring, thereby capping the opening of the GroEL channel. The polypeptide is Co-chaperonin GroES (Brevibacillus brevis (strain 47 / JCM 6285 / NBRC 100599)).